A 66-amino-acid polypeptide reads, in one-letter code: DNA-directed RNA polymerase subunit omega (66 aa).

This sequence belongs to the RNA polymerase subunit omega family. As to quaternary structure, the RNAP catalytic core consists of 2 alpha, 1 beta, 1 beta' and 1 omega subunit. When a sigma factor is associated with the core the holoenzyme is formed, which can initiate transcription.

The enzyme catalyses RNA(n) + a ribonucleoside 5'-triphosphate = RNA(n+1) + diphosphate. In terms of biological role, promotes RNA polymerase assembly. Latches the N- and C-terminal regions of the beta' subunit thereby facilitating its interaction with the beta and alpha subunits. The polypeptide is DNA-directed RNA polymerase subunit omega (Clostridium botulinum (strain Alaska E43 / Type E3)).